The chain runs to 400 residues: Argininosuccinate synthase (400 aa).

ATP is bound by residues 10–18 (AYSGGVDTS) and Ala-38. An L-citrulline-binding site is contributed by Tyr-89. Gly-119 provides a ligand contact to ATP. L-aspartate contacts are provided by Thr-121, Asn-125, and Asp-126. Asn-125 contributes to the L-citrulline binding site. 5 residues coordinate L-citrulline: Arg-129, Ser-177, Ser-186, Glu-262, and Tyr-274.

The protein belongs to the argininosuccinate synthase family. Type 1 subfamily. As to quaternary structure, homotetramer.

Its subcellular location is the cytoplasm. The enzyme catalyses L-citrulline + L-aspartate + ATP = 2-(N(omega)-L-arginino)succinate + AMP + diphosphate + H(+). It functions in the pathway amino-acid biosynthesis; L-arginine biosynthesis; L-arginine from L-ornithine and carbamoyl phosphate: step 2/3. In Prochlorococcus marinus (strain NATL2A), this protein is Argininosuccinate synthase.